Consider the following 225-residue polypeptide: Putative ATP-dependent Clp protease proteolytic subunit-like (225 aa).

The protein belongs to the peptidase S14 family.

Functionally, has lost the two conserved residues (Ser and His) proposed to be part of the active site. Therefore it could be inactive. The sequence is that of Putative ATP-dependent Clp protease proteolytic subunit-like (clpR) from Synechocystis sp. (strain ATCC 27184 / PCC 6803 / Kazusa).